Here is a 322-residue protein sequence, read N- to C-terminus: Gas vesicle protein L (322 aa).

A disordered region spans residues 1-85 (MTEQSSGSAT…SEQATVDWST (85 aa)). Basic and acidic residues predominate over residues 17–36 (ETAKQETGRKNEQPEERTVT). Residues 45–57 (INTTTAESETGSE) show a composition bias toward polar residues. Positions 58–72 (QESKAGSEQESKAGS) are enriched in basic and acidic residues. A compositionally biased stretch (polar residues) spans 73-85 (EQESEQATVDWST).

This sequence belongs to the gas vesicle GvpF/GvpL family. In terms of assembly, gvpF to GvpM interact with each other in vitro, and may form multi-subunit complex(es). Interacts with GvpC, GvpN and GvpO.

The protein localises to the gas vesicle. In terms of biological role, proteins GvpF to GvpM might be involved in nucleating gas vesicle formation. A minor component of the gas vesicle. Gas vesicles are small, hollow, gas filled protein structures that are found in several microbial planktonic microorganisms. They allow positioning of halobacteria at the optimal depth for growth in the poorly aerated, shallow brine pools of their habitat. Expression of a 9.5 kb mc-vac DNA fragment containing 2 divergently transcribed regions (gvpD-gvpE-gvpF-gvpG-gvpH-gvpI-gvpJ-gvpK-gvpL-gvpM and gvpA-gvpC-gvpN-gvpO) allows H.volcanii to produce gas vesicles. The chain is Gas vesicle protein L from Haloferax mediterranei (strain ATCC 33500 / DSM 1411 / JCM 8866 / NBRC 14739 / NCIMB 2177 / R-4) (Halobacterium mediterranei).